Reading from the N-terminus, the 377-residue chain is Geranylgeranyl transferase type-1 subunit beta (377 aa).

PFTB repeat units lie at residues 144–186 (KEAC…YMLN), 193–234 (MKKA…CLMG), 245–284 (LNRI…KLLK), and 291–333 (FEKN…SLME). Residues 219–221 (HGG) and 263–266 (RPNK) contribute to the geranylgeranyl diphosphate site. Zn(2+)-binding residues include Asp-269 and Cys-271. 272–275 (YSFW) provides a ligand contact to geranylgeranyl diphosphate. His-321 serves as a coordination point for Zn(2+).

It belongs to the protein prenyltransferase subunit beta family. In terms of assembly, heterodimer of FNTA and PGGT1B. PGGT1B mediates interaction with substrate peptides. It depends on Zn(2+) as a cofactor. Mg(2+) is required as a cofactor.

It catalyses the reaction geranylgeranyl diphosphate + L-cysteinyl-[protein] = S-geranylgeranyl-L-cysteinyl-[protein] + diphosphate. Functionally, catalyzes the transfer of a geranyl-geranyl moiety from geranyl-geranyl pyrophosphate to a cysteine at the fourth position from the C-terminus of proteins having the C-terminal sequence Cys-aliphatic-aliphatic-X. Known substrates include RAC1, RAC2, RAP1A and RAP1B. This chain is Geranylgeranyl transferase type-1 subunit beta (PGGT1B), found in Homo sapiens (Human).